A 398-amino-acid polypeptide reads, in one-letter code: Enoyl-[acyl-carrier-protein] reductase [NADH] (398 aa).

Residues 48-53 (GSSTGY), 74-75 (FE), 111-112 (DA), and 139-140 (LA) contribute to the NAD(+) site. Tyrosine 225 is a substrate binding site. The Proton donor role is filled by tyrosine 235. NAD(+)-binding positions include lysine 244 and 273–275 (VVT).

The protein belongs to the TER reductase family. Monomer.

It catalyses the reaction a 2,3-saturated acyl-[ACP] + NAD(+) = a (2E)-enoyl-[ACP] + NADH + H(+). It functions in the pathway lipid metabolism; fatty acid biosynthesis. Functionally, involved in the final reduction of the elongation cycle of fatty acid synthesis (FAS II). Catalyzes the reduction of a carbon-carbon double bond in an enoyl moiety that is covalently linked to an acyl carrier protein (ACP). The polypeptide is Enoyl-[acyl-carrier-protein] reductase [NADH] (Pseudomonas paraeruginosa (strain DSM 24068 / PA7) (Pseudomonas aeruginosa (strain PA7))).